An 87-amino-acid polypeptide reads, in one-letter code: MANHKSALKRHRQSIKRNLRNNMVRTRIKNVVKEVRSAVEANDTELAATALRKATSVLDKAATKKVIHARAAARRISRLSAAVNKMA.

The segment covering 1–19 (MANHKSALKRHRQSIKRNL) has biased composition (basic residues). Residues 1-22 (MANHKSALKRHRQSIKRNLRNN) form a disordered region.

The protein belongs to the bacterial ribosomal protein bS20 family.

In terms of biological role, binds directly to 16S ribosomal RNA. The polypeptide is Small ribosomal subunit protein bS20 (Maridesulfovibrio salexigens (strain ATCC 14822 / DSM 2638 / NCIMB 8403 / VKM B-1763) (Desulfovibrio salexigens)).